The chain runs to 2556 residues: Non-reducing polyketide synthase tazA (2556 aa).

An N-terminal acylcarrier protein transacylase domain (SAT) region spans residues 16-270; the sequence is LFGPQALSFT…QAIGLRGRFH (255 aa). The active-site Nucleophile; for transacylase activity is the Cys-143. The Proton donor/acceptor; for transacylase activity role is filled by His-270. The Ketosynthase family 3 (KS3) domain occupies 397-769; the sequence is EDEIAVIGMA…GSNASMIVTQ (373 aa). A malonyl-CoA:ACP transacylase (MAT) domain region spans residues 876–1209; sequence CFGGQISRFV…WAHHCTQAPA (334 aa). The interval 1254–1383 is N-terminal hotdog fold; it reads YTFVGYQDEG…GQIIFQSAAE (130 aa). Residues 1254–1560 form the PKS/mFAS DH domain; the sequence is YTFVGYQDEG…YSRLPKSTMS (307 aa). A product template (PT) domain region spans residues 1257–1564; the sequence is VGYQDEGKRQ…PKSTMSKMLT (308 aa). The active-site Proton acceptor; for dehydratase activity is His-1285. A C-terminal hotdog fold region spans residues 1408–1560; that stretch reads DPDDVLQGRN…YSRLPKSTMS (153 aa). Asp-1465 serves as the catalytic Proton donor; for dehydratase activity. A disordered region spans residues 1567-1621; that stretch reads TAPSERRAQVDSPSMPASINAPPSASEQAPVEPAPQTKESAPIAEPGAGGQSNSK. The span at 1577–1593 shows a compositional bias: polar residues; that stretch reads DSPSMPASINAPPSASE. Residues 1620-1694 form the Carrier domain; the sequence is SKVPGIVVEV…DVVQCVHKTL (75 aa). An O-(pantetheine 4'-phosphoryl)serine modification is found at Ser-1654. The interval 1700-1731 is disordered; it reads SAAQESEGNLTPASSGTQSPRSDPVSDTSLSD. Residues 1702–1731 are compositionally biased toward polar residues; that stretch reads AQESEGNLTPASSGTQSPRSDPVSDTSLSD. The segment at 1830-2107 is methyltransferase domain; that stretch reads LEHEGRLIDI…DWTDGHLAEN (278 aa). The interval 2180–2424 is NADPH-binding (R) domain; that stretch reads VTGATGSLGA…WTPVDVVAST (245 aa).

The cofactor is pantetheine 4'-phosphate.

It functions in the pathway secondary metabolite biosynthesis. Its function is as follows. Non-reducing polyketide synthase; part of the gene cluster that mediates the biosynthesis of azaterrilone A and other azaphilones, a class of fungal metabolites characterized by a highly oxygenated pyrano-quinone bicyclic core and exhibiting a broad range of bioactivities. The first step of the pathway begins with tazA that assembles one acetyl-CoA starter unit, five malonyl-CoA units, and catalyzes a series of Claisen condensations, methylation, PT-mediated cyclization, and finally releases the first hexaketide precursor through the R-domain. The tazA product then undergoes reduction on its terminal ketone and the following pyran-ring formation by yet undetermined enzyme(s). Dehydration and enoyl reduction, possibly involving the trans-enoyl reductase tazE leads to the next intermediate. TazD is predicted as an acetyltransferase and might catalyze the acetylation steps leading to the synthesis of azaterrilone A. Azaterrilone A is not the final product of the taz pathway and both the highly reducing polyketide synthase tazB and the dual enzyme tazHJ catalyze late steps of the pathway, leading to the production of the 2 final stereoisomers that contain additional polyketide modification whose structures have still to be determined. The chain is Non-reducing polyketide synthase tazA from Aspergillus terreus (strain NIH 2624 / FGSC A1156).